The following is a 442-amino-acid chain: HTH-type transcriptional regulator NorG (442 aa).

Residues 2-46 (KIPPQRQLAIQYNVNRVTIIKSIELLEAEGFIYTKVGSGTYVNDY) form the HTH gntR-type domain. The segment at residues 6–25 (QRQLAIQYNVNRVTIIKSIE) is a DNA-binding region (H-T-H motif). K288 is subject to N6-(pyridoxal phosphate)lysine.

The protein in the C-terminal section; belongs to the class-I pyridoxal-phosphate-dependent aminotransferase family. The cofactor is pyridoxal 5'-phosphate.

Positively regulates the expression of the NorB efflux pump and negatively regulates the expression of the AbcA efflux pump. Binds specifically to the promoters of norA, norB and norC and abcA genes. Could also have an aminotransferase activity. The protein is HTH-type transcriptional regulator NorG (norG) of Staphylococcus aureus (strain Mu50 / ATCC 700699).